Consider the following 221-residue polypeptide: ATP-dependent dethiobiotin synthetase BioD (221 aa).

12–17 is an ATP binding site; the sequence is EVGKTV. Thr16 contacts Mg(2+). Lys39 is an active-site residue. Substrate is bound at residue Thr43. Residues Asp47, 105–108, and 165–166 each bind ATP; these read EGLG and SC. Residues Asp47 and Glu105 each coordinate Mg(2+).

This sequence belongs to the dethiobiotin synthetase family. Homodimer. It depends on Mg(2+) as a cofactor.

The protein resides in the cytoplasm. It catalyses the reaction (7R,8S)-7,8-diammoniononanoate + CO2 + ATP = (4R,5S)-dethiobiotin + ADP + phosphate + 3 H(+). The enzyme catalyses (7R,8S)-8-amino-7-(carboxyamino)nonanoate + ATP = (4R,5S)-dethiobiotin + ADP + phosphate + H(+). Its pathway is cofactor biosynthesis; biotin biosynthesis; biotin from 7,8-diaminononanoate: step 1/2. Its function is as follows. Catalyzes a mechanistically unusual reaction, the ATP-dependent insertion of CO2 between the N7 and N8 nitrogen atoms of 7,8-diaminopelargonic acid (DAPA, also called 7,8-diammoniononanoate) to form a ureido ring. This cyanobacterium does not encode bioA (which catalyzes the formation of the precursor for this reaction in the cannonical pathway), instead it encodes bioU, which replaces bioA and also performs the first half of the cannonical BioD reaction. Thus in this organism BioD has a different substrate. This is ATP-dependent dethiobiotin synthetase BioD from Crocosphaera subtropica (strain ATCC 51142 / BH68) (Cyanothece sp. (strain ATCC 51142)).